Consider the following 116-residue polypeptide: MTIQRILPSARLSEVSIHNNLAYFAGQVPELTIEQNAYEQTKEVLGLIDKLLAKIGSNKSNILTAQIFLADMKDYAQLNQAWDEWVDHVSPPSRATVEAKLADPHWKVEIVIIATC.

It belongs to the RutC family.

The chain is RutC family protein HI_1627 from Haemophilus influenzae (strain ATCC 51907 / DSM 11121 / KW20 / Rd).